The sequence spans 304 residues: Olfactory receptor 52A4 (304 aa).

Over 1-32 the chain is Extracellular; the sequence is MALPITNGTLFMPFVLTFIGIPGFESVQCWIG. Asparagine 7 is a glycosylation site (N-linked (GlcNAc...) asparagine). Residues 33–53 traverse the membrane as a helical segment; sequence IPFCATYVIALIGNSLLLIII. The Cytoplasmic segment spans residues 54–61; that stretch reads KSEPSLHE. The helical transmembrane segment at 62–82 threads the bilayer; sequence PMYIFLATLGATDISLSTSIV. Topologically, residues 83–103 are extracellular; sequence PKMLDIFWFHLPEIYFDACLF. A disulfide bridge links cysteine 101 with cysteine 184. A helical membrane pass occupies residues 104-124; the sequence is QMWLIHTFQGIESGVLLAMAL. At 125 to 146 the chain is on the cytoplasmic side; it reads DRCVAICYPLRRAIVFTRQLVT. Residues 147 to 167 traverse the membrane as a helical segment; sequence YIVVGVTLRPAILVIPCLLLI. The Extracellular segment spans residues 168–203; that stretch reads KCHLKLYRTKLIYHTYCERVALVKLATEDVYINKVY. Residues 204–224 traverse the membrane as a helical segment; the sequence is GILGAFIVGGLDFIFITLSYI. Over 225 to 255 the chain is Cytoplasmic; that stretch reads QIFITVFHLPLKEARLKVFNTCIPHIYVFFQ. A helical membrane pass occupies residues 256-276; the sequence is FYLLAFFFIFYSQIWILYPII. Residues 277–279 are Extracellular-facing; it reads CTY. The helical transmembrane segment at 280-300 threads the bilayer; it reads HLVQSLPTGPTIPQPLYLWVK. At 301–304 the chain is on the cytoplasmic side; the sequence is DQTH.

Belongs to the G-protein coupled receptor 1 family.

Its subcellular location is the cell membrane. In terms of biological role, odorant receptor. The protein is Olfactory receptor 52A4 of Homo sapiens (Human).